Reading from the N-terminus, the 145-residue chain is D-aminoacyl-tRNA deacylase (145 aa).

Positions 137–138 match the Gly-cisPro motif, important for rejection of L-amino acids motif; the sequence is GP.

Belongs to the DTD family. As to quaternary structure, homodimer.

The protein resides in the cytoplasm. The catalysed reaction is glycyl-tRNA(Ala) + H2O = tRNA(Ala) + glycine + H(+). The enzyme catalyses a D-aminoacyl-tRNA + H2O = a tRNA + a D-alpha-amino acid + H(+). Its function is as follows. An aminoacyl-tRNA editing enzyme that deacylates mischarged D-aminoacyl-tRNAs. Also deacylates mischarged glycyl-tRNA(Ala), protecting cells against glycine mischarging by AlaRS. Acts via tRNA-based rather than protein-based catalysis; rejects L-amino acids rather than detecting D-amino acids in the active site. By recycling D-aminoacyl-tRNA to D-amino acids and free tRNA molecules, this enzyme counteracts the toxicity associated with the formation of D-aminoacyl-tRNA entities in vivo and helps enforce protein L-homochirality. The chain is D-aminoacyl-tRNA deacylase from Citrobacter koseri (strain ATCC BAA-895 / CDC 4225-83 / SGSC4696).